Consider the following 326-residue polypeptide: Vitamin B12 import system permease protein BtuC (326 aa).

9 helical membrane passes run leucine 17–alanine 39, arginine 59–phenylalanine 81, proline 88–leucine 107, glutamine 111–leucine 133, leucine 146–threonine 168, tryptophan 188–cysteine 205, methionine 242–leucine 264, valine 274–leucine 296, and leucine 303–leucine 322.

Belongs to the binding-protein-dependent transport system permease family. FecCD subfamily. The complex is composed of two ATP-binding proteins (BtuD), two transmembrane proteins (BtuC) and a solute-binding protein (BtuF).

It is found in the cell inner membrane. Functionally, part of the ABC transporter complex BtuCDF involved in vitamin B12 import. Involved in the translocation of the substrate across the membrane. The polypeptide is Vitamin B12 import system permease protein BtuC (Salmonella typhi).